We begin with the raw amino-acid sequence, 654 residues long: MAAAALGSSSGSASPAVAELCQNTPETFLEASKLLLTYADNILRNPNDEKYRSIRIGNTAFSTRLLPVRGAVECLFEMGFEEGETHLIFPKKASVEQLQKIRDLIAIERSSRLDGSNKSHKVESSQQPAASTQLPTTPSSNPSGLNQHTRNRQGQSPDPPSASTVTPDSAILGVLQSNIQHVLVYENPALQEKALACIPVQELKRKSQEKLSRVRKLDKGTNISDEDFLLLELLHWFKEEFFHWVNNILCSKCGGQTRSRDRSLLPNDDELKWGAKKVEDHYCDACQFSNRFPRYNNPEKLLETRCGRCGEWANCFTLCCRALGFEARYVWDYTDHVWTEVYSPSQQRWLHCDACEDVCDKPLLYEIGWGKKLSYVIAFSKDEVVDVTWRYSCKHEEVIARRTKVKEALLRETINGLNKQRQLFLSENRRKELLQRIIVELVEFISPKTPKPGELGGRISGSVAWRVARGEMGLQRKETSFIPSENEKISKQLHLCYNIVKDRYVRVSNNNQTISGWENGVWKMESIFRKVETDWHMVYLARKEGSSFAYISWKFECGSVGLKIDSISIRTTSQTFQTGTIEWKLRSDTARVELTGDNNLHSYADFSGATEVILEAELSRGDGDVAWQHTQLFRQSLNDHEENCLEIIIKFSDL.

Ala2 carries the N-acetylalanine modification. The PUB domain maps to 30–91; that stretch reads EASKLLLTYA…EGETHLIFPK (62 aa). Residues 112–123 are compositionally biased toward basic and acidic residues; sequence RLDGSNKSHKVE. Positions 112–167 are disordered; sequence RLDGSNKSHKVESSQQPAASTQLPTTPSSNPSGLNQHTRNRQGQSPDPPSASTVTP. Polar residues predominate over residues 124–167; that stretch reads SSQQPAASTQLPTTPSSNPSGLNQHTRNRQGQSPDPPSASTVTP. Position 137 is a phosphothreonine (Thr137). Residues Cys250, Cys253, Cys283, and Cys286 each coordinate Zn(2+). The active-site Nucleophile is the Cys309. Catalysis depends on residues His336 and Asp353. In terms of domain architecture, PAW spans 454-654; sequence ELGGRISGSV…LEIIIKFSDL (201 aa).

This sequence belongs to the transglutaminase-like superfamily. PNGase family. In terms of assembly, component of a complex required to couple retrotranslocation, ubiquitination and deglycosylation composed of NGLY1, SAKS1, AMFR, VCP and RAD23B. Interacts with the proteasome components RAD23B and PSMC1. Interacts with directly with VCP. Interacts with DERL1, bringing it close to the endoplasmic reticulum membrane. Interacts with SAKS1. It depends on Zn(2+) as a cofactor.

Its subcellular location is the cytoplasm. It carries out the reaction Hydrolysis of an N(4)-(acetyl-beta-D-glucosaminyl)asparagine residue in which the glucosamine residue may be further glycosylated, to yield a (substituted) N-acetyl-beta-D-glucosaminylamine and a peptide containing an aspartate residue.. Inhibited by Z-VAD-fmk, a well-known caspase inhibitor, which inhibits enzyme activity through covalent binding of the carbohydrate to the single Cys-306 residue. Functionally, specifically deglycosylates the denatured form of N-linked glycoproteins in the cytoplasm and assists their proteasome-mediated degradation. Cleaves the beta-aspartyl-glucosamine (GlcNAc) of the glycan and the amide side chain of Asn, converting Asn to Asp. Prefers proteins containing high-mannose over those bearing complex type oligosaccharides. Can recognize misfolded proteins in the endoplasmic reticulum that are exported to the cytosol to be destroyed and deglycosylate them, while it has no activity toward native proteins. Deglycosylation is a prerequisite for subsequent proteasome-mediated degradation of some, but not all, misfolded glycoproteins. This chain is Peptide-N(4)-(N-acetyl-beta-glucosaminyl)asparagine amidase (NGLY1), found in Macaca fascicularis (Crab-eating macaque).